Reading from the N-terminus, the 233-residue chain is Small ribosomal subunit protein uS2c (233 aa).

It belongs to the universal ribosomal protein uS2 family.

It localises to the plastid. The protein resides in the apicoplast. The protein is Small ribosomal subunit protein uS2c of Toxoplasma gondii.